Reading from the N-terminus, the 232-residue chain is Phosphoglycolate phosphatase (232 aa).

Asp-13 functions as the Nucleophile in the catalytic mechanism. Mg(2+) contacts are provided by Asp-13, Asp-15, and Asp-175.

The protein belongs to the HAD-like hydrolase superfamily. CbbY/CbbZ/Gph/YieH family. As to quaternary structure, monomer. Requires Mg(2+) as cofactor. Chloride is required as a cofactor.

The enzyme catalyses 2-phosphoglycolate + H2O = glycolate + phosphate. It participates in organic acid metabolism; glycolate biosynthesis; glycolate from 2-phosphoglycolate: step 1/1. Functionally, specifically catalyzes the dephosphorylation of 2-phosphoglycolate. Is involved in the dissimilation of the intracellular 2-phosphoglycolate formed during the DNA repair of 3'-phosphoglycolate ends, a major class of DNA lesions induced by oxidative stress. The sequence is that of Phosphoglycolate phosphatase from Yersinia pseudotuberculosis serotype I (strain IP32953).